A 492-amino-acid chain; its full sequence is Tyrosine--tRNA ligase, mitochondrial (492 aa).

L-tyrosine is bound at residue Y89. D93 lines the ATP pocket. The short motif at 94–103 (PTAQSLHLGN) is the 'HIGH' region element. L-tyrosine-binding residues include D133, Y239, Q243, D246, and Q265. Residues 303 to 307 (KFGKS) carry the 'KMSKS' region motif. K306 provides a ligand contact to ATP.

This sequence belongs to the class-I aminoacyl-tRNA synthetase family. As to quaternary structure, homodimer.

It is found in the mitochondrion matrix. The catalysed reaction is tRNA(Tyr) + L-tyrosine + ATP = L-tyrosyl-tRNA(Tyr) + AMP + diphosphate + H(+). Functionally, catalyzes the attachment of tyrosine to tRNA(Tyr) in a two-step reaction: tyrosine is first activated by ATP to form Tyr-AMP and then transferred to the acceptor end of tRNA(Tyr). This is Tyrosine--tRNA ligase, mitochondrial (MSY1) from Saccharomyces cerevisiae (strain ATCC 204508 / S288c) (Baker's yeast).